The following is a 520-amino-acid chain: Glucose starvation modulator protein 1 (520 aa).

A DNA-binding region (zn(2)-C6 fungal-type) is located at residues 20 to 48 (CSFCHSKHLQCSNNRPCKNCVKRNIADQC). Disordered stretches follow at residues 63–104 (AKNK…SSGR) and 194–213 (PASPTPSSTSEYQTIPPNEM). Positions 74 to 85 (SLESSSSPFSPL) are enriched in low complexity. Residues 90-104 (INSQSSQPLDPSSGR) are compositionally biased toward polar residues. Positions 376 to 445 (DYEKLSHLNS…FKLFKSVAVG (70 aa)) constitute a PAS domain.

This sequence belongs to the ERT1/acuK family.

The protein localises to the nucleus. Functionally, transcription factor which regulates nonfermentable carbon utilization. The chain is Glucose starvation modulator protein 1 (GSM1) from Meyerozyma guilliermondii (strain ATCC 6260 / CBS 566 / DSM 6381 / JCM 1539 / NBRC 10279 / NRRL Y-324) (Yeast).